The following is a 137-amino-acid chain: Large ribosomal subunit protein uL16 (137 aa).

It belongs to the universal ribosomal protein uL16 family. In terms of assembly, part of the 50S ribosomal subunit.

Functionally, binds 23S rRNA and is also seen to make contacts with the A and possibly P site tRNAs. This Stenotrophomonas maltophilia (strain K279a) protein is Large ribosomal subunit protein uL16.